A 334-amino-acid polypeptide reads, in one-letter code: L-lactate dehydrogenase B chain (334 aa).

A2 is modified (N-acetylalanine). Residue K7 is modified to N6-acetyllysine. Residue S44 is modified to Phosphoserine. Residues 53-58 (DVLEDK) and R100 contribute to the NAD(+) site. K58 is subject to N6-acetyllysine. R107 lines the substrate pocket. K119 is modified (N6-acetyllysine). An NAD(+)-binding site is contributed by N139. N139 and R170 together coordinate substrate. H194 (proton acceptor) is an active-site residue. A Phosphotyrosine modification is found at Y240. A substrate-binding site is contributed by T249. N6-acetyllysine is present on K329.

Belongs to the LDH/MDH superfamily. LDH family. Homotetramer. Interacts with PTEN upstream reading frame protein MP31; the interaction leads to inhibition of mitochondrial lactate dehydrogenase activity, preventing conversion of lactate to pyruvate in mitochondria.

It is found in the cytoplasm. The protein localises to the mitochondrion inner membrane. The catalysed reaction is (S)-lactate + NAD(+) = pyruvate + NADH + H(+). It participates in fermentation; pyruvate fermentation to lactate; (S)-lactate from pyruvate: step 1/1. Interconverts simultaneously and stereospecifically pyruvate and lactate with concomitant interconversion of NADH and NAD(+). This is L-lactate dehydrogenase B chain (LDHB) from Monodelphis domestica (Gray short-tailed opossum).